Consider the following 354-residue polypeptide: NADH-quinone oxidoreductase subunit H (354 aa).

The next 8 helical transmembrane spans lie at 25–45 (LVRI…LILW), 91–111 (WIYL…WAVI), 126–146 (LLYA…AGWA), 170–190 (MGFA…SGIV), 205–225 (FLSW…ISGI), 267–287 (IVIS…PFGF), 290–310 (FVPG…VFIW), and 330–350 (IFIP…MSPL).

It belongs to the complex I subunit 1 family. As to quaternary structure, NDH-1 is composed of 14 different subunits. Subunits NuoA, H, J, K, L, M, N constitute the membrane sector of the complex.

It is found in the cell inner membrane. It carries out the reaction a quinone + NADH + 5 H(+)(in) = a quinol + NAD(+) + 4 H(+)(out). NDH-1 shuttles electrons from NADH, via FMN and iron-sulfur (Fe-S) centers, to quinones in the respiratory chain. The immediate electron acceptor for the enzyme in this species is believed to be ubiquinone. Couples the redox reaction to proton translocation (for every two electrons transferred, four hydrogen ions are translocated across the cytoplasmic membrane), and thus conserves the redox energy in a proton gradient. This subunit may bind ubiquinone. In Paraburkholderia phytofirmans (strain DSM 17436 / LMG 22146 / PsJN) (Burkholderia phytofirmans), this protein is NADH-quinone oxidoreductase subunit H.